We begin with the raw amino-acid sequence, 118 residues long: IgW heavy chain V region W26 (118 aa).

The Ig-like domain maps to 1–109 (NIVLTQPESA…PQWGYWGSGT (109 aa)). Cys22 and Cys93 are disulfide-bonded.

In terms of tissue distribution, expressed mainly in lymphoid tissues including spleen, epigonal organ and circulating lymphocytes.

The sequence is that of IgW heavy chain V region W26 from Heterodontus francisci (Horn shark).